We begin with the raw amino-acid sequence, 218 residues long: Probable GTP-binding protein EngB (218 aa).

The EngB-type G domain occupies 31–205 (SGIEIAFAGR…EQKVTSWYAQ (175 aa)). GTP-binding positions include 39–46 (GRSNAGKS), 66–70 (GRTQL), 84–87 (DLPG), 151–154 (TKAD), and 184–186 (FSS). The Mg(2+) site is built by Ser46 and Thr68.

The protein belongs to the TRAFAC class TrmE-Era-EngA-EngB-Septin-like GTPase superfamily. EngB GTPase family. Mg(2+) serves as cofactor.

Functionally, necessary for normal cell division and for the maintenance of normal septation. This chain is Probable GTP-binding protein EngB, found in Psychromonas ingrahamii (strain DSM 17664 / CCUG 51855 / 37).